A 456-amino-acid polypeptide reads, in one-letter code: Hydroxymethylglutaryl coenzyme A synthase (456 aa).

(3S)-3-hydroxy-3-methylglutaryl-CoA is bound at residue Ala34. Catalysis depends on Glu85, which acts as the Proton donor/acceptor. Residues Cys119, Thr161, Ser211, His258, Lys267, Asn335, and Ser369 each coordinate (3S)-3-hydroxy-3-methylglutaryl-CoA. The active-site Acyl-thioester intermediate is the Cys119. His258 (proton donor/acceptor) is an active-site residue.

Belongs to the thiolase-like superfamily. HMG-CoA synthase family.

The enzyme catalyses acetoacetyl-CoA + acetyl-CoA + H2O = (3S)-3-hydroxy-3-methylglutaryl-CoA + CoA + H(+). In terms of biological role, HMG-CoA synthase; part of the gene cluster that mediates the biosynthesis of 1233A, a natural compound known as an inhibitor of HMG-CoA synthase in the mevalonate pathway and with antibacterial and antifungal activities. This enzyme condenses acetyl-CoA with acetoacetyl-CoA to form HMG-CoA, which is the substrate for HMG-CoA reductase. As part of the 1233A biosynthesis cluster, is involved in conferring self-resistance to 1233A. In Fusarium sp, this protein is Hydroxymethylglutaryl coenzyme A synthase.